Consider the following 441-residue polypeptide: FAM10 family protein At4g22670 (441 aa).

The interval 41-114 (KIPTGVHEED…PQKMGDSSVE (74 aa)) is disordered. The segment covering 46 to 55 (VHEEDKDTKP) has biased composition (basic and acidic residues). 2 stretches are compositionally biased toward acidic residues: residues 61–71 (EESDDDMDETE) and 78–102 (EEEE…EPDN). Residues Ser-63 and Ser-89 each carry the phosphoserine modification. TPR repeat units lie at residues 121 to 156 (EAAQ…NPTS), 158 to 190 (IMYG…NPDS), and 191 to 224 (AKGY…DYDE). Positions 236-285 (NAHKLEEHRRKYDRLRKEREDKKAERDRLRRRAEAQAAYDKAKKEEQSSS) form a coiled coil. The span at 244–282 (RRKYDRLRKEREDKKAERDRLRRRAEAQAAYDKAKKEEQ) shows a compositional bias: basic and acidic residues. Positions 244–314 (RRKYDRLRKE…MPGGFPGGMG (71 aa)) are disordered. The span at 289–314 (SGGGFPGGMPGGFPGGMPGGFPGGMG) shows a compositional bias: gly residues. One can recognise an STI1 domain in the interval 391-430 (DPELMTAFSDPEVMAALQDVMKNPANLAKHQANPKVAPVI).

This sequence belongs to the FAM10 family.

In Arabidopsis thaliana (Mouse-ear cress), this protein is FAM10 family protein At4g22670.